Here is a 979-residue protein sequence, read N- to C-terminus: Oncostatin-M-specific receptor subunit beta (979 aa).

The signal sequence occupies residues 1-27 (MALFAVFQTTFFLTLLSLRTYQSEVLA). Over 28-740 (ERLPLTPVSL…VTTPDEHSSM (713 aa)) the chain is Extracellular. Asn163 carries N-linked (GlcNAc...) asparagine glycosylation. Cysteines 245 and 255 form a disulfide. N-linked (GlcNAc...) asparagine glycans are attached at residues Asn326 and Asn380. Fibronectin type-III domains lie at 335 to 428 (NPFS…TLEA), 433 to 528 (APDV…DPEN), 529 to 623 (KEVE…SQEL), and 625 to 736 (PSDN…TPDE). The short motif at 415–419 (WSEWS) is the WSXWS motif element. N-linked (GlcNAc...) asparagine glycans are attached at residues Asn446 and Asn580. A helical transmembrane segment spans residues 741–761 (LIHILLPMVFCVLLIMVMCYL). The Cytoplasmic segment spans residues 762–979 (KSQWIKETCY…TLLDPGEHYC (218 aa)). The Box 1 motif motif lies at 770–778 (CYPDIPDPY). 2 positions are modified to phosphoserine: Ser826 and Ser889.

The protein belongs to the type I cytokine receptor family. Type 2 subfamily. Heterodimer composed of OSMR and IL6ST (type II OSM receptor). Heterodimer with IL31RA to form the IL31 receptor. In terms of tissue distribution, expressed in keratinocytes (at protein level). Expressed at relatively high levels in all neural cells as well as fibroblast and epithelial cells.

The protein resides in the membrane. Its function is as follows. Associates with IL31RA to form the IL31 receptor. Binds IL31 to activate STAT3 and possibly STAT1 and STAT5. Capable of transducing OSM-specific signaling events. This chain is Oncostatin-M-specific receptor subunit beta (OSMR), found in Homo sapiens (Human).